The following is a 1771-amino-acid chain: MGQELSQHERYVEQLKQALKTRGVKVKYADLLKFFDFVKDTCPWFPQEGTIDIKRWRRVGDCFQDYYNTFGPEKVPVTAFSYWNLIKELIDKKEVNPQVMAAVAQTEEILKSNSQTDLTKTSQNPDLDLISLDSDDEGAKSSSLQDKGLSSTKKPKRFPVLLTAQTSKDPEDPNPSEVDWDGLEDEAAKYHNPDWPPFLTRPPPYNKATPSAPTVMAVVNPKEELKEKIAQLEEQIKLEELHQALISKLQKLKTGNETVTHPDTAGGLSRTPHWPGQHIPKGKCCASREKEEQIPKDIFPVTETVDGQGQAWRHHNGFDFAVIKELKTAASQYGATAPYTLAIVESVADNWLTPTDWNTLVRAVLSGGDHLLWKSEFFENCRDTAKRNQQAGNGWDFDMLTGSGNYSSTDAQMQYDPGLFAQIQAAATKAWRKLPVKGDPGASLTGVKQGPDEPFADFVHRLITTAGRIFGSAEAGVDYVKQLAYENANPACQAAIRPYRKKTDLTGYIRLCSDIGPSYQQGLAMAAAFSGQTVKDFLNNKNKEKGGCCFKCGKKGHFAKNCHEHAHNNAEPKVPGLCPRCKRGKHWANECKSKTDNQGNPIPPHQGNRVEGPAPGPETSLWGSQLCSSQQKQPISKLTRATPGSAGLDLCSTSHTVLTPEMGPQALSTGIYGPLPPNTFGLILGRSSITMKGLQVYPGVIDNDYTGEIKIMAKAVNNIVTVSQGNRIAQLILLPLIETDNKVQQPYRGQGSFGSSDIYWVQPITCQKPSLTLWLDDKMFTGLIDTGADVTIIKLEDWPPNWPITDTLTNLRGIGQSNNPKQSSKYLTWRDKENNSGLIKPFVIPNLPVNLWGRDLLSQMKIMMCSPNDIVTAQMLAQGYSPGKGLGKKENGILHPIPNQGQSNKKGFGNFLTAAIDILAPQQCAEPITWKSDEPVWVDQWPLTNDKLAAAQQLVQEQLEAGHITESSSPWNTPIFVIKKKSGKWRLLQDLRAVNATMVLMGALQPGLPSPVAIPQGYLKIIIDLKDCFFSIPLHPSDQKRFAFSLPSTNFKEPMQRFQWKVLPQGMANSPTLCQKYVATAIHKVRHAWKQMYIIHYMDDILIAGKDGQQVLQCFDQLKQELTAAGLHIAPEKVQLQDPYTYLGFELNGPKITNQKAVIRKDKLQTLNDFQKLLGDINWLRPYLKLTTGDLKPLFDTLKGDSDPNSHRSLSKEALASLEKVETAIAEQFVTHINYSLPLIFLIFNTALTPTGLFWQDNPIMWIHLPASPKKVLLPYYDAIADLIILGRDHSKKYFGIEPSTIIQPYSKSQIDWLMQNTEMWPIACASFVGILDNHYPPNKLIQFCKLHTFVFPQIISKTPLNNALLVFTDGSSTGMAAYTLTDTTIKFQTNLNSAQLVELQALIAVLSAFPNQPLNIYTDSAYLAHSIPLLETVAQIKHISETAKLFLQCQQLIYNRSIPFYIGHVRAHSGLPGPIAQGNQRADLATKIVASNINTNLESAQNAHTLHHLNAQTLRLMFNIPREQARQIVKQCPICVTYLPVPHLGVNPRGLFPNMIWQMDVTHYSEFGNLKYIHVSIDTFSGFLLATLQTGETTKHVITHLLHCFSIIGLPKQIKTDNGPGYTSKNFQEFCSTLQIKHITGIPYNPQGQGIVERAHLSLKTTIEKIKKGEWYPRKGTPRNILNHALFILNFLNLDDQNKSAADRFWHNNPKKQFAMVKWKDPLDNTWHGPDPVLIWGRGSVCVYSQTYDAARWLPERLVRQVSNNNQSRE.

Gly-2 is lipidated: N-myristoyl glycine; by host. Residues 101-161 constitute a propeptide that is removed on maturation; it reads AAVAQTEEIL…TKKPKRFPVL (61 aa). Polar residues-rich tracts occupy residues 113–125 and 140–152; these read NSQT…SQNP and KSSS…LSST. The tract at residues 113–178 is disordered; that stretch reads NSQTDLTKTS…DPEDPNPSEV (66 aa). Residues 202-205 carry the PPXY motif motif; that stretch reads PPPY. Positions 210 to 213 match the PTAP/PSAP motif motif; that stretch reads PSAP. A coiled-coil region spans residues 216-257; it reads MAVVNPKEELKEKIAQLEEQIKLEELHQALISKLQKLKTGNE. The segment at 260–279 is disordered; the sequence is THPDTAGGLSRTPHWPGQHI. The short motif at 335 to 338 is the PTAP/PSAP motif element; the sequence is ATAP. 2 CCHC-type zinc fingers span residues 547-564 and 576-593; these read GCCF…NCHE and GLCP…ECKS. Positions 592–626 are disordered; sequence KSKTDNQGNPIPPHQGNRVEGPAPGPETSLWGSQL. Positions 780–856 constitute a Peptidase A2 domain; the sequence is FTGLIDTGAD…LPVNLWGRDL (77 aa). Residue Asp-785 is the Protease; shared with dimeric partner of the active site. Residues 867–913 enclose the G-patch domain; sequence PNDIVTAQMLAQGYSPGKGLGKKENGILHPIPNQGQSNKKGFGNFLT. The Reverse transcriptase domain maps to 959–1147; the sequence is LEAGHITESS…DPYTYLGFEL (189 aa). 7 residues coordinate Mg(2+): Asp-1024, Asp-1099, Asp-1100, Asp-1370, Glu-1399, Asp-1420, and Asp-1484. Positions 1361-1492 constitute an RNase H type-1 domain; the sequence is LNNALLVFTD…ADLATKIVAS (132 aa). An Integrase-type zinc finger spans residues 1496-1537; sequence TNLESAQNAHTLHHLNAQTLRLMFNIPREQARQIVKQCPICV. Zn(2+) is bound by residues His-1505, His-1509, Cys-1533, and Cys-1536. In terms of domain architecture, Integrase catalytic spans 1550–1719; it reads RGLFPNMIWQ…NPKKQFAMVK (170 aa). Mg(2+)-binding residues include Asp-1561, Asp-1618, and Glu-1654. A DNA-binding region (integrase-type) is located at residues 1716–1765; sequence AMVKWKDPLDNTWHGPDPVLIWGRGSVCVYSQTYDAARWLPERLVRQVSN.

It belongs to the retroviral Pol polyprotein family. As to quaternary structure, homodimer. Interacts with the G-patch peptide. In terms of assembly, interacts with the reverse transcriptase/ribonuclease H. As to quaternary structure, homotrimer. Mg(2+) is required as a cofactor. In terms of processing, released by autocatalytic processing. The protease can undergo further autoprocessing to yield 2 shorter but enzymatically active forms of 12 kDa and 13 kDa. Myristoylated. Myristoylation of the matrix (MA) domain mediates the transport and binding of Gag polyproteins to the host plasma membrane and is required for the assembly of viral particles. Post-translationally, specific enzymatic cleavages in vivo yield mature proteins.

It localises to the virion. The enzyme catalyses DNA(n) + a 2'-deoxyribonucleoside 5'-triphosphate = DNA(n+1) + diphosphate. It carries out the reaction Endonucleolytic cleavage to 5'-phosphomonoester.. It catalyses the reaction dUTP + H2O = dUMP + diphosphate + H(+). In terms of biological role, matrix protein. Its function is as follows. Nucleocapsid protein p14: Nucleocapsid protein. Capsid protein. Functionally, the aspartyl protease mediates proteolytic cleavages of Gag and Gag-Pol polyproteins during or shortly after the release of the virion from the plasma membrane. Cleavages take place as an ordered, step-wise cascade to yield mature proteins. This process is called maturation. Displays maximal activity during the budding process just prior to particle release from the cell. In terms of biological role, enhances the activity of the reverse transcriptase. May be part of the mature RT. Its function is as follows. RT is a multifunctional enzyme that converts the viral dimeric RNA genome into dsDNA in the cytoplasm, shortly after virus entry into the cell. This enzyme displays a DNA polymerase activity that can copy either DNA or RNA templates, and a ribonuclease H (RNase H) activity that cleaves the RNA strand of RNA-DNA heteroduplexes in a partially processive 3' to 5' endonucleasic mode. Conversion of viral genomic RNA into dsDNA requires many steps. A tRNA binds to the primer-binding site (PBS) situated at the 5' end of the viral RNA. RT uses the 3' end of the tRNA primer to perfom a short round of RNA-dependent minus-strand DNA synthesis. The reading proceeds through the U5 region and ends after the repeated (R) region which is present at both ends of viral RNA. The portion of the RNA-DNA heteroduplex is digested by the RNase H, resulting in a ssDNA product attached to the tRNA primer. This ssDNA/tRNA hybridizes with the identical R region situated at the 3' end of viral RNA. This template exchange, known as minus-strand DNA strong stop transfer, can be either intra- or intermolecular. RT uses the 3' end of this newly synthesized short ssDNA to perfom the RNA-dependent minus-strand DNA synthesis of the whole template. RNase H digests the RNA template except for a polypurine tract (PPT) situated at the 5' end of the genome. It is not clear if both polymerase and RNase H activities are simultaneous. RNase H probably can proceed both in a polymerase-dependent (RNA cut into small fragments by the same RT performing DNA synthesis) and a polymerase-independent mode (cleavage of remaining RNA fragments by free RTs). Secondly, RT performs DNA-directed plus-strand DNA synthesis using the PPT that has not been removed by RNase H as primers. PPT and tRNA primers are then removed by RNase H. The 3' and 5' ssDNA PBS regions hybridize to form a circular dsDNA intermediate. Strand displacement synthesis by RT to the PBS and PPT ends produces a blunt ended, linear dsDNA copy of the viral genome that includes long terminal repeats (LTRs) at both ends. Catalyzes viral DNA integration into the host chromosome, by performing a series of DNA cutting and joining reactions. The protein is Gag-Pro-Pol polyprotein (gag-pro-pol) of Macaca mulatta (Rhesus macaque).